A 434-amino-acid polypeptide reads, in one-letter code: Putative nuclease OPG089 (434 aa).

Mg(2+)-binding residues include D33, D74, E168, D170, D196, and D198.

This sequence belongs to the XPG/RAD2 endonuclease family. FEN1 subfamily. Mg(2+) serves as cofactor.

The protein localises to the virion. Putative nuclease that seems to be required for double-strand break repair, homologous recombination, and production of full-length viral genomic DNA. In Vaccinia virus (strain Copenhagen) (VACV), this protein is Putative nuclease OPG089 (OPG089).